A 178-amino-acid polypeptide reads, in one-letter code: Ribosome maturation factor RimP (178 aa).

The protein belongs to the RimP family.

The protein localises to the cytoplasm. Required for maturation of 30S ribosomal subunits. The polypeptide is Ribosome maturation factor RimP (Caulobacter vibrioides (strain ATCC 19089 / CIP 103742 / CB 15) (Caulobacter crescentus)).